We begin with the raw amino-acid sequence, 114 residues long: UPF0342 protein LVIS_1488 (114 aa).

This sequence belongs to the UPF0342 family.

The protein is UPF0342 protein LVIS_1488 of Levilactobacillus brevis (strain ATCC 367 / BCRC 12310 / CIP 105137 / JCM 1170 / LMG 11437 / NCIMB 947 / NCTC 947) (Lactobacillus brevis).